Consider the following 433-residue polypeptide: MALDLRTIFQCEPSENNLGSENSEFRQSQGPAVQREEGISEFSRMVLNSFQDSNNSYARQELQRLYRIFHSWLQPEKHSKDEIISLLVLEQFMIGGHCNDKASVKEKWKSSGKNLERFMEDLTDDSINPPALVHVHMQGQEALFSEDMPLKDVIVHLTKQVSAQTPREANMGTPSQTSQDTSLETGEGCEDEQDGCNSSLKTTQVNENITNQGNQIVSLIIIQEENGPRSEEGGVSSDNPNNSKRAELVTARSQEGSINGITFQGVPMEMGAGCISQPEQSSPESALTHQSNEGNSTCEVHQKGSHGVRKSYKCEECPKVFKYLCHLLAHQRRHRNERPFVCPECQKGFFQISDLRVHQIIHTGKKPFTCSMCEKSFSHKTNLRSHERIHTGEKPYTCPFCKTSYRQSSTYHRHMRTHEKITPPSVPSTPEAS.

The SCAN box domain occupies R44–S126. 2 stretches are compositionally biased toward polar residues: residues S162–E184 and Q277–C298. 2 disordered regions span residues S162 to S199 and A272 to C298. 4 C2H2-type zinc fingers span residues Y312–H334, F340–H362, F368–H390, and Y396–H418. Positions H414 to S433 are disordered.

The protein localises to the nucleus. The protein resides in the chromosome. It is found in the telomere. Functionally, embryonic stem (ES) cell-specific transcription factor required to regulate ES cell pluripotency. Binds telomeres and plays a key role in genomic stability in ES cells by regulating telomere elongation. Acts as an activator of spontaneous telomere sister chromatid exchange (T-SCE) and telomere elongation in undifferentiated ES cells. This is Zinc finger and SCAN domain-containing protein 4 (ZSCAN4) from Pongo pygmaeus (Bornean orangutan).